We begin with the raw amino-acid sequence, 622 residues long: Carbon monoxide dehydrogenase (622 aa).

The [4Fe-4S] cluster site is built by C40, C49, C52, C57, and C68. H256, C334, C442, C473, and C514 together coordinate [Ni-4Fe-5S] cluster.

Belongs to the Ni-containing carbon monoxide dehydrogenase family. As to quaternary structure, homodimer. The cofactor is [4Fe-4S] cluster. Requires [Ni-4Fe-5S] cluster as cofactor.

It carries out the reaction CO + 2 oxidized [2Fe-2S]-[ferredoxin] + H2O = 2 reduced [2Fe-2S]-[ferredoxin] + CO2 + 2 H(+). Its function is as follows. CODH oxidizes carbon monoxide coupled, via CooF, to the reduction of a hydrogen cation by a hydrogenase (possibly CooH). The sequence is that of Carbon monoxide dehydrogenase (cooS) from Archaeoglobus fulgidus (strain ATCC 49558 / DSM 4304 / JCM 9628 / NBRC 100126 / VC-16).